Reading from the N-terminus, the 274-residue chain is Syntaxin-12 (274 aa).

The disordered stretch occupies residues 1-20; it reads MSYGPLDMYRNPGPSGPQPR. S2 carries the N-acetylserine modification. Topologically, residues 2-250 are cytoplasmic; the sequence is SYGPLDMYRN…AYYQKKSRKK (249 aa). Positions 34–80 form a coiled coil; sequence QRISQATAQIKNLMSQLGTKQDSSKLQENLQQFQHSTNQLAKETNEL. Positions 128-150 are disordered; it reads EKESIARARAGSRLSAEDRQREE. Phosphoserine is present on residues S139, S142, S218, and S225. Residues 178-240 form the t-SNARE coiled-coil homology domain; that stretch reads LELIKERETA…ERASDQLQRA (63 aa). The helical; Anchor for type IV membrane protein transmembrane segment at 251–271 threads the bilayer; it reads MCILVLVLSVIVTVLVVVIWV. The Vesicular portion of the chain corresponds to 272–274; it reads ASK.

This sequence belongs to the syntaxin family. As to quaternary structure, associates with the BLOC-1 complex. Interacts with BLOC1S6. Interacts with NAPA and SNAP23. Identified in a complex containing STX6, STX12, VAMP4 and VTI1A. Interacts with GRIPAP1. Forms a complex with GRIP1, GRIA2 and NSG1; controls the intracellular fate of AMPAR and the endosomal sorting of the GRIA2 subunit toward recycling and membrane targeting. Interacts with NSG1. Interacts with TPC1. Interacts (via N-terminus) with VPS13B. Ubiquitous. Highly expressed in brain.

It is found in the endosome membrane. The protein resides in the golgi apparatus membrane. It localises to the endomembrane system. Its subcellular location is the early endosome membrane. The protein localises to the recycling endosome membrane. SNARE promoting fusion of transport vesicles with target membranes. Together with SNARE STX6, promotes movement of vesicles from endosomes to the cell membrane, and may therefore function in the endocytic recycling pathway. Through complex formation with GRIP1, GRIA2 and NSG1 controls the intracellular fate of AMPAR and the endosomal sorting of the GRIA2 subunit toward recycling and membrane targeting. This chain is Syntaxin-12 (Stx12), found in Rattus norvegicus (Rat).